Reading from the N-terminus, the 85-residue chain is Beta-defensin 18 (85 aa).

The signal sequence occupies residues 1–23; it reads MQSTMKMFGIILMVIFSVSCGPS. Intrachain disulfides connect Cys39–Cys65, Cys46–Cys60, and Cys50–Cys66.

This sequence belongs to the beta-defensin family.

It is found in the secreted. Functionally, has antibacterial activity. The chain is Beta-defensin 18 (Defb18) from Mus musculus (Mouse).